Consider the following 176-residue polypeptide: Phosphopantetheine adenylyltransferase (176 aa).

Serine 8 lines the substrate pocket. ATP is bound by residues 8 to 9 (SF) and histidine 16. Positions 40, 72, and 86 each coordinate substrate. Residues 87 to 89 (GLR), glutamate 97, and 122 to 128 (YSFLSSS) each bind ATP.

It belongs to the bacterial CoaD family. In terms of assembly, homohexamer. Mg(2+) is required as a cofactor.

It localises to the cytoplasm. It carries out the reaction (R)-4'-phosphopantetheine + ATP + H(+) = 3'-dephospho-CoA + diphosphate. The protein operates within cofactor biosynthesis; coenzyme A biosynthesis; CoA from (R)-pantothenate: step 4/5. In terms of biological role, reversibly transfers an adenylyl group from ATP to 4'-phosphopantetheine, yielding dephospho-CoA (dPCoA) and pyrophosphate. The sequence is that of Phosphopantetheine adenylyltransferase from Acaryochloris marina (strain MBIC 11017).